Here is a 288-residue protein sequence, read N- to C-terminus: ATP synthase gamma chain (288 aa).

The protein belongs to the ATPase gamma chain family. F-type ATPases have 2 components, CF(1) - the catalytic core - and CF(0) - the membrane proton channel. CF(1) has five subunits: alpha(3), beta(3), gamma(1), delta(1), epsilon(1). CF(0) has three main subunits: a, b and c.

The protein localises to the cell membrane. Its function is as follows. Produces ATP from ADP in the presence of a proton gradient across the membrane. The gamma chain is believed to be important in regulating ATPase activity and the flow of protons through the CF(0) complex. The protein is ATP synthase gamma chain of Staphylococcus epidermidis (strain ATCC 35984 / DSM 28319 / BCRC 17069 / CCUG 31568 / BM 3577 / RP62A).